A 246-amino-acid polypeptide reads, in one-letter code: 1-(5-phosphoribosyl)-5-[(5-phosphoribosylamino)methylideneamino] imidazole-4-carboxamide isomerase (246 aa).

D8 (proton acceptor) is an active-site residue. The active-site Proton donor is the D131.

The protein belongs to the HisA/HisF family.

Its subcellular location is the cytoplasm. It carries out the reaction 1-(5-phospho-beta-D-ribosyl)-5-[(5-phospho-beta-D-ribosylamino)methylideneamino]imidazole-4-carboxamide = 5-[(5-phospho-1-deoxy-D-ribulos-1-ylimino)methylamino]-1-(5-phospho-beta-D-ribosyl)imidazole-4-carboxamide. It functions in the pathway amino-acid biosynthesis; L-histidine biosynthesis; L-histidine from 5-phospho-alpha-D-ribose 1-diphosphate: step 4/9. The chain is 1-(5-phosphoribosyl)-5-[(5-phosphoribosylamino)methylideneamino] imidazole-4-carboxamide isomerase from Albidiferax ferrireducens (strain ATCC BAA-621 / DSM 15236 / T118) (Rhodoferax ferrireducens).